A 237-amino-acid polypeptide reads, in one-letter code: Demethylmenaquinone methyltransferase (237 aa).

S-adenosyl-L-methionine is bound by residues Thr-58, Asp-79, and 107 to 108; that span reads NA.

The protein belongs to the class I-like SAM-binding methyltransferase superfamily. MenG/UbiE family.

The catalysed reaction is a 2-demethylmenaquinol + S-adenosyl-L-methionine = a menaquinol + S-adenosyl-L-homocysteine + H(+). The protein operates within quinol/quinone metabolism; menaquinone biosynthesis; menaquinol from 1,4-dihydroxy-2-naphthoate: step 2/2. Functionally, methyltransferase required for the conversion of demethylmenaquinol (DMKH2) to menaquinol (MKH2). This chain is Demethylmenaquinone methyltransferase, found in Lactiplantibacillus plantarum (strain ATCC BAA-793 / NCIMB 8826 / WCFS1) (Lactobacillus plantarum).